The primary structure comprises 1207 residues: DNA-directed RNA polymerase subunit beta' (1207 aa).

The Zn(2+) site is built by C60, C62, C75, and C78. D449, D451, and D453 together coordinate Mg(2+). Zn(2+) contacts are provided by C822, C896, C903, and C906.

It belongs to the RNA polymerase beta' chain family. The RNAP catalytic core consists of 2 alpha, 1 beta, 1 beta' and 1 omega subunit. When a sigma factor is associated with the core the holoenzyme is formed, which can initiate transcription. Requires Mg(2+) as cofactor. Zn(2+) is required as a cofactor.

It carries out the reaction RNA(n) + a ribonucleoside 5'-triphosphate = RNA(n+1) + diphosphate. DNA-dependent RNA polymerase catalyzes the transcription of DNA into RNA using the four ribonucleoside triphosphates as substrates. The sequence is that of DNA-directed RNA polymerase subunit beta' from Staphylococcus aureus (strain USA300).